We begin with the raw amino-acid sequence, 435 residues long: Succinate--CoA ligase [ADP-forming] subunit beta, mitochondrial (435 aa).

The N-terminal 20 residues, 1–20 (MIGRISQPLLNTSQKFMAPA), are a transit peptide targeting the mitochondrion. The region spanning 32–259 (MKILQNYEIK…SNAEFRQAKL (228 aa)) is the ATP-grasp domain. Residues lysine 69 and 76 to 78 (GRG) contribute to the ATP site. Asparagine 229 and aspartate 243 together coordinate Mg(2+). Residues asparagine 294 and 352 to 354 (GIM) contribute to the substrate site.

Belongs to the succinate/malate CoA ligase beta subunit family. ATP-specific subunit beta subfamily. In terms of assembly, heterodimer of an alpha and a beta subunit. The beta subunit determines specificity for ATP. Mg(2+) is required as a cofactor.

Its subcellular location is the mitochondrion. The enzyme catalyses succinate + ATP + CoA = succinyl-CoA + ADP + phosphate. The protein operates within carbohydrate metabolism; tricarboxylic acid cycle; succinate from succinyl-CoA (ligase route): step 1/1. Functionally, ATP-specific succinyl-CoA synthetase functions in the citric acid cycle (TCA), coupling the hydrolysis of succinyl-CoA to the synthesis of ATP and thus represents the only step of substrate-level phosphorylation in the TCA. The beta subunit provides nucleotide specificity of the enzyme and binds the substrate succinate, while the binding sites for coenzyme A and phosphate are found in the alpha subunit. In Caenorhabditis elegans, this protein is Succinate--CoA ligase [ADP-forming] subunit beta, mitochondrial.